An 86-amino-acid polypeptide reads, in one-letter code: Apolipoprotein C-I (86 aa).

Positions 1–26 are cleaved as a signal peptide; that stretch reads MRLFLSLPVLVVALLMILEGPGPAQG.

This sequence belongs to the apolipoprotein C1 family.

It is found in the secreted. Inhibitor of lipoprotein binding to the low density lipoprotein (LDL) receptor, LDL receptor-related protein, and very low density lipoprotein (VLDL) receptor. Associates with high density lipoproteins (HDL) and the triacylglycerol-rich lipoproteins in the plasma and makes up about 10% of the protein of the VLDL and 2% of that of HDL. Appears to interfere directly with fatty acid uptake and is also the major plasma inhibitor of cholesteryl ester transfer protein (CETP). Binds free fatty acids and reduces their intracellular esterification. Modulates the interaction of APOE with beta-migrating VLDL and inhibits binding of beta-VLDL to the LDL receptor-related protein. The protein is Apolipoprotein C-I (APOC1) of Aotus nancymaae (Ma's night monkey).